Consider the following 311-residue polypeptide: Mitochondrial arginine transporter BAC1 (311 aa).

Solcar repeat units lie at residues 12-101, 111-203, and 219-305; these read FGFY…AKLF, PRPE…LRYH, and VDMG…SMKM. 6 helical membrane-spanning segments follow: residues 18-38, 76-96, 113-133, 178-197, 222-242, and 288-308; these read YVAGMMAGLATVAVGHPFDTV, GATSSFMGMAFESSLMFGIYS, PEIIVPSAMFGGAIISFVLCP, GGSATLLRECTGNAVFFTVY, GIGVLTGGLGGIACWSAVLPF, and AFPANAAAIVAWEFSMKMLGI.

Belongs to the mitochondrial carrier (TC 2.A.29) family. High expression in flowers and siliques. Lower expression in leaves and stems.

The protein resides in the mitochondrion inner membrane. Inhibited by mercuric chloride. Functionally, mitochondrial arginine transporter that catalyzes the counter-exchange of arginine with lysine, ornithine, arginine and histidine. Substrate preference in reconstituted proteoliposomes is arginine &gt; lysine &gt; ornithine &gt; histidine. May be involved in the delivery of arginine, released from seed reserves, to mitochondrial arginase and the export of ornithine. This Arabidopsis thaliana (Mouse-ear cress) protein is Mitochondrial arginine transporter BAC1 (BAC1).